The primary structure comprises 363 residues: S-adenosylmethionine:tRNA ribosyltransferase-isomerase (363 aa).

The protein belongs to the QueA family. As to quaternary structure, monomer.

The protein localises to the cytoplasm. It catalyses the reaction 7-aminomethyl-7-carbaguanosine(34) in tRNA + S-adenosyl-L-methionine = epoxyqueuosine(34) in tRNA + adenine + L-methionine + 2 H(+). The protein operates within tRNA modification; tRNA-queuosine biosynthesis. Transfers and isomerizes the ribose moiety from AdoMet to the 7-aminomethyl group of 7-deazaguanine (preQ1-tRNA) to give epoxyqueuosine (oQ-tRNA). In Synechococcus sp. (strain RCC307), this protein is S-adenosylmethionine:tRNA ribosyltransferase-isomerase.